A 139-amino-acid chain; its full sequence is Cofilin (139 aa).

In terms of domain architecture, ADF-H spans 4–135; that stretch reads GVKVSQECLD…SYDTVLDKVS (132 aa).

This sequence belongs to the actin-binding proteins ADF family.

It is found in the cytoplasm. The protein localises to the cytoskeleton. Its subcellular location is the nucleus matrix. Controls reversibly actin polymerization and depolymerization in a pH-sensitive manner. It has the ability to bind G- and F-actin in a 1:1 ratio of cofilin to actin. Binding to F-actin is regulated by tropomyosin. It is the major component of intranuclear and cytoplasmic actin rods. Required for accumulation of actin at the cell division site via depolymerizing actin at the cell ends. In association with myosin II has a role in the assembly of the contractile ring via severing actin filaments. Involved in the maintenance of the contractile ring once formed. In association with profilin and capping protein, has a role in the mitotic reorganization of the actin cytoskeleton. This Mycosarcoma maydis (Corn smut fungus) protein is Cofilin (COF1).